The sequence spans 154 residues: 6,7-dimethyl-8-ribityllumazine synthase (154 aa).

Residues Phe22, Ala56–Glu58, and Ala80–Ile82 each bind 5-amino-6-(D-ribitylamino)uracil. Residue Ala85–Thr86 coordinates (2S)-2-hydroxy-3-oxobutyl phosphate. The active-site Proton donor is the His88. Phe113 provides a ligand contact to 5-amino-6-(D-ribitylamino)uracil. Arg127 contributes to the (2S)-2-hydroxy-3-oxobutyl phosphate binding site.

It belongs to the DMRL synthase family. Forms an icosahedral capsid composed of 60 subunits, arranged as a dodecamer of pentamers.

The catalysed reaction is (2S)-2-hydroxy-3-oxobutyl phosphate + 5-amino-6-(D-ribitylamino)uracil = 6,7-dimethyl-8-(1-D-ribityl)lumazine + phosphate + 2 H2O + H(+). It participates in cofactor biosynthesis; riboflavin biosynthesis; riboflavin from 2-hydroxy-3-oxobutyl phosphate and 5-amino-6-(D-ribitylamino)uracil: step 1/2. In terms of biological role, catalyzes the formation of 6,7-dimethyl-8-ribityllumazine by condensation of 5-amino-6-(D-ribitylamino)uracil with 3,4-dihydroxy-2-butanone 4-phosphate. This is the penultimate step in the biosynthesis of riboflavin. The protein is 6,7-dimethyl-8-ribityllumazine synthase of Geobacillus thermodenitrificans (strain NG80-2).